We begin with the raw amino-acid sequence, 924 residues long: Probable dipeptidyl-aminopeptidase B (924 aa).

The segment at 1-104 is disordered; sequence MPPFTYSDDT…DQRSPGDGQR (104 aa). Topologically, residues 1 to 111 are cytoplasmic; the sequence is MPPFTYSDDT…GQRMDRSLRR (111 aa). The segment covering 9-23 has biased composition (basic and acidic residues); it reads DTLRSGRDRFRDHSP. Residues 31-43 are compositionally biased toward polar residues; the sequence is SQETDSSASTTSI. Composition is skewed to basic and acidic residues over residues 47 to 58 and 92 to 104; these read RIQERLDTKEFT and SRSD…DGQR. The helical; Signal-anchor for type II membrane protein transmembrane segment at 112–132 threads the bilayer; sequence WLFIVSGVLVATWVIGLFVFV. Residues 133-924 lie on the Vacuolar side of the membrane; sequence SSKAYKPSSS…GMKKRAAPTA (792 aa). Residues asparagine 231 and asparagine 364 are each glycosylated (N-linked (GlcNAc...) asparagine). Catalysis depends on serine 768, which acts as the Charge relay system. N-linked (GlcNAc...) asparagine glycosylation is present at asparagine 827. Active-site charge relay system residues include aspartate 845 and histidine 878.

Belongs to the peptidase S9B family.

The protein localises to the vacuole membrane. It catalyses the reaction Release of an N-terminal dipeptide, Xaa-Yaa-|-Zaa-, from a polypeptide, preferentially when Yaa is Pro, provided Zaa is neither Pro nor hydroxyproline.. In terms of biological role, type IV dipeptidyl-peptidase which removes N-terminal dipeptides sequentially from polypeptides having unsubstituted N-termini provided that the penultimate residue is proline. This chain is Probable dipeptidyl-aminopeptidase B (DAPB), found in Sordaria macrospora (strain ATCC MYA-333 / DSM 997 / K(L3346) / K-hell).